The chain runs to 370 residues: Cyclin-A3-4 (370 aa).

It belongs to the cyclin family. Cyclin AB subfamily. As to quaternary structure, interacts with FZR2/CCS52A1, FZR1/CCS52A2 and FZR3/CCS52B.

The polypeptide is Cyclin-A3-4 (CYCA3-4) (Arabidopsis thaliana (Mouse-ear cress)).